We begin with the raw amino-acid sequence, 103 residues long: MINIDRALRSSIRTGKVVLGSNSSLEHGLRGDAKLIIYASDCPEHVRQKLRSLEVPVYAYQSSGRDLGAACGKPFPVAALAVIEPGDSEIMALLREIRGVANE.

Belongs to the eukaryotic ribosomal protein eL30 family.

The protein is Large ribosomal subunit protein eL30 of Methanothrix thermoacetophila (strain DSM 6194 / JCM 14653 / NBRC 101360 / PT) (Methanosaeta thermophila).